The sequence spans 246 residues: Octanoyltransferase (246 aa).

Residues 38–213 (AQQSDEFWVL…FLAKRLGLTP (176 aa)) enclose the BPL/LPL catalytic domain. Residues 77 to 84 (RGGQVTYH), 144 to 146 (SLG), and 157 to 159 (GLA) each bind substrate. Residue Cys175 is the Acyl-thioester intermediate of the active site. Residues 225–246 (RQENVTTGGDPGSALTQQPERL) are disordered.

It belongs to the LipB family.

Its subcellular location is the cytoplasm. It catalyses the reaction octanoyl-[ACP] + L-lysyl-[protein] = N(6)-octanoyl-L-lysyl-[protein] + holo-[ACP] + H(+). The protein operates within protein modification; protein lipoylation via endogenous pathway; protein N(6)-(lipoyl)lysine from octanoyl-[acyl-carrier-protein]: step 1/2. Functionally, catalyzes the transfer of endogenously produced octanoic acid from octanoyl-acyl-carrier-protein onto the lipoyl domains of lipoate-dependent enzymes. Lipoyl-ACP can also act as a substrate although octanoyl-ACP is likely to be the physiological substrate. This chain is Octanoyltransferase, found in Alcanivorax borkumensis (strain ATCC 700651 / DSM 11573 / NCIMB 13689 / SK2).